A 262-amino-acid chain; its full sequence is Oxidoreductase AgnL4 (262 aa).

The protein belongs to the avfA family.

It functions in the pathway secondary metabolite biosynthesis. Oxidoreductase; part of the gene cluster that mediates the biosynthesis of agnestins, dihydroxy-xanthone metabolites. The pathway begins with the assembly and cyclization of atrochrysone thioester by the non-reducing polyketide synthase Agnpks1. The atrochrysone carboxyl ACP thioesterase AgnL7 then breaks the thioester bond and releases the atrochrysone carboxylic acid as the first enzyme-free intermediate. The decarboxylase AgnL1 then catalyzes the concerted decarboxylation-elimination required to convert atochrysone carboxylic acid into emodin anthrone, which is further oxidized to emodin by the anthrone oxygenase AgnL2. Emodin then undergoes reduction catalyzed by the oxidoreductase AgnL4 to yield the dihydroquinone tautomer which is the substrate for reduction by the short chain dehydrogenase AgnL6 reduction to produce hydroxyketone, followed by AgnL8 dehydration and likely spontaneous autoxidation to chrysophanol. Baeyer-Villiger oxidation by the oxidase AgnL3 leads to monodictyphenone via cleavage of the C-10/C-10a bond of chrysophanol. Alternative cleavage at the C-4a/C-10 bond of chrysophanol also leads to the formation some cephalone F. Further conversion to agnestins A and B, requires reduction to dihydro-monodictyphenone, oxidation to agnestin C probably via an epoxide, and rearrangement to either agnestin A or agnestin B directly, although agnestin A or agnestin B can also interconvert. Within the cluster, AgnR1 is the only unassigned oxidoreductase present which could be involved in this conversion. However, AgnR1 seems not to be involved in this step, and thus genes involved in the proposed oxidation/reduction may be located elsewhere on the genome. Further agnestin A derivatives are probably formed by spontaneous decarboxylations, dehydrations and methanolysis reactions. The protein is Oxidoreductase AgnL4 of Paecilomyces divaricatus (Penicillium divaricatum).